Here is a 412-residue protein sequence, read N- to C-terminus: Putative competence-damage inducible protein (412 aa).

This sequence belongs to the CinA family.

The protein is Putative competence-damage inducible protein of Bacillus cereus (strain ATCC 10987 / NRS 248).